Reading from the N-terminus, the 614-residue chain is UvrABC system protein C (614 aa).

Positions 14-91 constitute a GIY-YIG domain; it reads TSPGCYIHKD…IKENKPKYNI (78 aa). In terms of domain architecture, UVR spans 196-231; it reads DKIIDDLKSKMAVAAQSMEFERAAEYRDLIQAIGTL. The segment at 595 to 614 is disordered; that stretch reads LPQVAEERVDYQTEGNHNEP. Residues 599–614 are compositionally biased toward basic and acidic residues; that stretch reads AEERVDYQTEGNHNEP.

Belongs to the UvrC family. Interacts with UvrB in an incision complex.

Its subcellular location is the cytoplasm. Its function is as follows. The UvrABC repair system catalyzes the recognition and processing of DNA lesions. UvrC both incises the 5' and 3' sides of the lesion. The N-terminal half is responsible for the 3' incision and the C-terminal half is responsible for the 5' incision. The sequence is that of UvrABC system protein C from Streptococcus pneumoniae serotype 4 (strain ATCC BAA-334 / TIGR4).